The chain runs to 275 residues: MSNSRQHQGHFARKRFGQNFLVDHGVIDSIVATIAPARGQRMVEIGPGLGALTEPLIARLATPETPLHAVELDRDLIARLKQRFGALLELHAGDALAFDFRSLAAPGDAPSLRIVGNLPYNISSPLLFHLMTFADVVVDQHFMLQNEVVERMVAEPGTKAFSRLSVMLQYRYVMDKLIDVPPESFQPPPKVDSAIVRMIPYAPHELPDVDPVLLGEIVTAAFSQRRKMLRNTLGDYRETIDFDALGFDLARRAEDVSVAEYVGVAQALAATRNAQ.

Positions 19, 21, 46, 71, 94, and 117 each coordinate S-adenosyl-L-methionine.

The protein belongs to the class I-like SAM-binding methyltransferase superfamily. rRNA adenine N(6)-methyltransferase family. RsmA subfamily.

The protein localises to the cytoplasm. It carries out the reaction adenosine(1518)/adenosine(1519) in 16S rRNA + 4 S-adenosyl-L-methionine = N(6)-dimethyladenosine(1518)/N(6)-dimethyladenosine(1519) in 16S rRNA + 4 S-adenosyl-L-homocysteine + 4 H(+). In terms of biological role, specifically dimethylates two adjacent adenosines (A1518 and A1519) in the loop of a conserved hairpin near the 3'-end of 16S rRNA in the 30S particle. May play a critical role in biogenesis of 30S subunits. In Burkholderia multivorans (strain ATCC 17616 / 249), this protein is Ribosomal RNA small subunit methyltransferase A.